A 423-amino-acid chain; its full sequence is Gamma-glutamyl phosphate reductase (423 aa).

Residues 1–14 show a composition bias toward low complexity; that stretch reads MTLQAAPRSAAAQQ. The interval 1 to 25 is disordered; sequence MTLQAAPRSAAAQQREPDLRQEVHD. Residues 15–25 show a composition bias toward basic and acidic residues; that stretch reads REPDLRQEVHD.

Belongs to the gamma-glutamyl phosphate reductase family.

It is found in the cytoplasm. It carries out the reaction L-glutamate 5-semialdehyde + phosphate + NADP(+) = L-glutamyl 5-phosphate + NADPH + H(+). It functions in the pathway amino-acid biosynthesis; L-proline biosynthesis; L-glutamate 5-semialdehyde from L-glutamate: step 2/2. Functionally, catalyzes the NADPH-dependent reduction of L-glutamate 5-phosphate into L-glutamate 5-semialdehyde and phosphate. The product spontaneously undergoes cyclization to form 1-pyrroline-5-carboxylate. The sequence is that of Gamma-glutamyl phosphate reductase from Mycobacterium marinum (strain ATCC BAA-535 / M).